Consider the following 948-residue polypeptide: Isoleucine--tRNA ligase (948 aa).

The short motif at 58–68 (PYANGDIHIGH) is the 'HIGH' region element. Residue E566 participates in L-isoleucyl-5'-AMP binding. The short motif at 607–611 (KMSKS) is the 'KMSKS' region element. Residue K610 participates in ATP binding. Positions 911, 914, 931, and 934 each coordinate Zn(2+).

The protein belongs to the class-I aminoacyl-tRNA synthetase family. IleS type 1 subfamily. Monomer. It depends on Zn(2+) as a cofactor.

The protein localises to the cytoplasm. It catalyses the reaction tRNA(Ile) + L-isoleucine + ATP = L-isoleucyl-tRNA(Ile) + AMP + diphosphate. Catalyzes the attachment of isoleucine to tRNA(Ile). As IleRS can inadvertently accommodate and process structurally similar amino acids such as valine, to avoid such errors it has two additional distinct tRNA(Ile)-dependent editing activities. One activity is designated as 'pretransfer' editing and involves the hydrolysis of activated Val-AMP. The other activity is designated 'posttransfer' editing and involves deacylation of mischarged Val-tRNA(Ile). This chain is Isoleucine--tRNA ligase, found in Vibrio vulnificus (strain CMCP6).